A 975-amino-acid chain; its full sequence is Kinesin-like protein KIN-14K (975 aa).

The segment at 1–40 (MKNRIKKGSSMIGVYGRSDGSSSIQSSNGSESRESIDDNK) is disordered. Over residues 17–30 (RSDGSSSIQSSNGS) the composition is skewed to low complexity. Basic and acidic residues predominate over residues 31 to 40 (ESRESIDDNK). A Calponin-homology (CH) domain is found at 40–143 (KQGHQSLVEW…SLKALKASFS (104 aa)). A coiled-coil region spans residues 289-345 (KERSNAELSKLKQELEIVKETHEKQFLELKLNAQKAKVELERQVKNSELRVVEAKEL). Residues 436–746 (NIRVYCRIRP…LKFAERVSGV (311 aa)) form the Kinesin motor domain. An ATP-binding site is contributed by 520-527 (GQTGSGKT). Residues 757-788 (GRDVRQLMEQVSNLKDMIAKKDEELQKFQNIN) adopt a coiled-coil conformation. Disordered stretches follow at residues 801 to 852 (VSPP…GAKD) and 900 to 975 (LFPE…NRKR). Positions 944 to 958 (LSISTTSSKALTSSK) are enriched in low complexity.

Belongs to the TRAFAC class myosin-kinesin ATPase superfamily. Kinesin family. KIN-14 subfamily.

This Arabidopsis thaliana (Mouse-ear cress) protein is Kinesin-like protein KIN-14K.